Consider the following 135-residue polypeptide: ATP synthase epsilon chain (135 aa).

It belongs to the ATPase epsilon chain family. In terms of assembly, F-type ATPases have 2 components, CF(1) - the catalytic core - and CF(0) - the membrane proton channel. CF(1) has five subunits: alpha(3), beta(3), gamma(1), delta(1), epsilon(1). CF(0) has three main subunits: a, b and c.

The protein resides in the cell inner membrane. Its function is as follows. Produces ATP from ADP in the presence of a proton gradient across the membrane. In Granulibacter bethesdensis (strain ATCC BAA-1260 / CGDNIH1), this protein is ATP synthase epsilon chain.